Consider the following 122-residue polypeptide: Large ribosomal subunit protein bL12 (122 aa).

Belongs to the bacterial ribosomal protein bL12 family. As to quaternary structure, homodimer. Part of the ribosomal stalk of the 50S ribosomal subunit. Forms a multimeric L10(L12)X complex, where L10 forms an elongated spine to which 2 to 4 L12 dimers bind in a sequential fashion. Binds GTP-bound translation factors.

Functionally, forms part of the ribosomal stalk which helps the ribosome interact with GTP-bound translation factors. Is thus essential for accurate translation. The polypeptide is Large ribosomal subunit protein bL12 (Staphylococcus aureus (strain Mu50 / ATCC 700699)).